Reading from the N-terminus, the 1012-residue chain is MTNLQDQTQQIVPFIRSLLMPTTGPASIPDDTLEKHTLRSETSTYNLTVGDTGSGLIVFFPGFPGSIVGAHYTLQSNGNYKFDQMLLTAQNLPASYNYCRLVSRSLTVRSSTLPGGVYALNGTINAVTFQGSLSELTDVSYNGLMSATANINDKIGNVLVGEGVTVLSLPTSYDLGYVRLGDPIPAIGLDPKMVATCDSSDRPRVYTITAADDYQFSSQYQPGGVTITLFSANIDAITSLSVGGELVFQTSVHGLVLGATIYLIGFDGTAVITRAVAANNGLTTGTDNLLPFNLVIPTNEITQPITSIKLEIVTSKSGGQAGDQMSWSARGSLAVTIHGGNYPGALRPVTLVAYERVATGSVVTVAGVSNFELIPNPELAKNLVTEYGRFDPGAMNYTKLILSERDRLGIKTVWPTREYTDFREYFMEVADLNSPLKIAGAFGFKDIIRAIRRIAVPVVSTLFPPAAPLAHAIGEGVDYLLGDEAQAASGTARAASGKARAASGRIRQLTLAADKGYEVVANLFQVPQNPVVDGILASPGVLRGAHNLDCVLREGATLFPVVITTVEDAMTPKALNSKMFAVIEGVREDLQPPSQRGSFIRTLSGHRVYGYAPDGVLPLETGRDYTVVPIDDVWDDSIMLSKDPIPPIVGNSGNLAIAYMDVFRPKVPIHVAMTGALNACGEIEKVSFRSTKLATAHRLGLKLAGPGAFDVNTGPNWATFIKRFPHNPRDWDRLPYLNLPYLPPNAGRQYHLAMAASEFKETPELESAVRAMEAAANVDPLFQSALSVFMWLEENGIVTDMANFALSDPNAHRMRNFLANAPQAGSKSQRAKYGTAGYGVEARGPTPEEAQREKDTRISKKMETMGIYFATPEWVALNGHRGPSPGQLKYWQNTREIPDPNEDYLDYVHAEKSRLASEEQILRAATSIYGAPGQAEPPQAFIDEVAKVYEINHGRGPNQEQMKDLLLTAMEMKHRNPRRALPKPKPKPNAPTQRPPGRLGRWIRTVSDEDLE.

D30 contributes to the a divalent metal cation binding site. Positions 513-755 (ADKGYEVVAN…AGRQYHLAMA (243 aa)) constitute a Peptidase S50 domain. The Nucleophile role is filled by S652. Residue K692 is part of the active site. The segment at 969-1012 (AMEMKHRNPRRALPKPKPKPNAPTQRPPGRLGRWIRTVSDEDLE) is disordered. The span at 975–986 (RNPRRALPKPKP) shows a compositional bias: basic residues. The tract at residues 1003–1012 (IRTVSDEDLE) is interaction with VP1 protein.

Homotrimer. A central divalent metal stabilizes the VP2 trimer. Interacts with host ITGA4/ITGB1. In terms of assembly, homodimer. Interacts (via C-terminus) with VP1 in the cytoplasm. Interacts with VP2. In terms of processing, specific enzymatic cleavages yield mature proteins. The capsid assembly seems to be regulated by polyprotein processing. The protease VP4 cleaves itself off the polyprotein, thus releasing pre-VP2 and VP3 within the infected cell. During capsid assembly, the C-terminus of pre-VP2 is further processed by VP4, giving rise to VP2, the external capsid protein and three small peptides that all stay closely associated with the capsid.

The protein resides in the virion. It is found in the host cytoplasm. Its function is as follows. Capsid protein VP2 self assembles to form an icosahedral capsid with a T=13 symmetry, about 70 nm in diameter, and consisting of 260 VP2 trimers. The capsid encapsulates the genomic dsRNA. VP2 is also involved in attachment and entry into the host cell by interacting with host ITGA4/ITGB1. Functionally, the precursor of VP2 plays an important role in capsid assembly. First, pre-VP2 and VP2 oligomers assemble to form a procapsid. Then, the pre-VP2 intermediates may be processed into VP2 proteins by proteolytic cleavage mediated by VP4 to obtain the mature virion. The final capsid is composed of pentamers and hexamers but VP2 has a natural tendency to assemble into all-pentameric structures. Therefore pre-VP2 may be required to allow formation of the hexameric structures. Protease VP4 is a serine protease that cleaves the polyprotein into its final products. Pre-VP2 is first partially cleaved, and may be completely processed by VP4 upon capsid maturation. In terms of biological role, capsid protein VP3 plays a key role in virion assembly by providing a scaffold for the capsid made of VP2. May self-assemble to form a T=4-like icosahedral inner-capsid composed of at least 180 trimers. Plays a role in genomic RNA packaging by recruiting VP1 into the capsid and interacting with the dsRNA genome segments to form a ribonucleoprotein complex. Additionally, the interaction of the VP3 C-terminal tail with VP1 removes the inherent structural blockade of the polymerase active site. Thus, VP3 can also function as a transcriptional activator. Its function is as follows. Structural peptide 1 is a small peptide derived from pre-VP2 C-terminus. It destabilizes and perforates cell membranes, suggesting a role during entry. Functionally, structural peptide 2 is a small peptide derived from pre-VP2 C-terminus. It is not essential for the virus viability, but viral growth is affected when missing. Structural peptide 3 is a small peptide derived from pre-VP2 C-terminus. It is not essential for the virus viability, but viral growth is affected when missing. In terms of biological role, structural peptide 4 is a small peptide derived from pVP2 C-terminus. It is essential for the virus viability. This chain is Structural polyprotein, found in Gallus gallus (Chicken).